The following is a 505-amino-acid chain: Ookinete surface protein PIMMS43 (505 aa).

Positions 1–24 (MQKRIYVSLFFLVFFLSKISVVLS) are cleaved as a signal peptide. Residues 188–221 (ERRKKKLDDEQKRQKDLEDTNRKENDEEQSYKKL) form a disordered region. A helical transmembrane segment spans residues 485 to 505 (SSIYSSIKYFFLLMLFVIYIL).

Monomer. May form multimers with an unknown protein(s).

It localises to the membrane. Functionally, involved in ookinete evasion of the mosquito complement-like response, oocyst maturation, sporozoite development and infectivity. This chain is Ookinete surface protein PIMMS43, found in Plasmodium falciparum (isolate 3D7).